A 325-amino-acid chain; its full sequence is Transcription initiation factor IIB (325 aa).

Residues 19–52 form a TFIIB-type zinc finger; it reads NKLWCMVCRIQDPDIIEDYAKGDLICRGCGVVVG. Cys23, Cys26, Cys44, and Cys47 together coordinate Zn(2+). 2 repeat units span residues 131–207 and 227–303.

This sequence belongs to the TFIIB family.

It localises to the nucleus. Functionally, general transcription factor that plays a role in transcription initiation by RNA polymerase II (Pol II). Involved in the pre-initiation complex (PIC) formation and Pol II recruitment at promoter DNA. This chain is Transcription initiation factor IIB (gtf2b), found in Dictyostelium discoideum (Social amoeba).